The chain runs to 263 residues: 5'-nucleotidase SurE (263 aa).

A divalent metal cation is bound by residues Asp-15, Asp-16, Ser-46, and Asn-102.

It belongs to the SurE nucleotidase family. It depends on a divalent metal cation as a cofactor.

The protein resides in the cytoplasm. It catalyses the reaction a ribonucleoside 5'-phosphate + H2O = a ribonucleoside + phosphate. Its function is as follows. Nucleotidase that shows phosphatase activity on nucleoside 5'-monophosphates. In Chlorobaculum tepidum (strain ATCC 49652 / DSM 12025 / NBRC 103806 / TLS) (Chlorobium tepidum), this protein is 5'-nucleotidase SurE.